The chain runs to 307 residues: Aspartate carbamoyltransferase catalytic subunit (307 aa).

Positions 54 and 55 each coordinate carbamoyl phosphate. Lysine 83 provides a ligand contact to L-aspartate. Carbamoyl phosphate-binding residues include arginine 104, histidine 132, and glutamine 135. 2 residues coordinate L-aspartate: arginine 165 and arginine 228. Carbamoyl phosphate contacts are provided by leucine 267 and proline 268.

Belongs to the aspartate/ornithine carbamoyltransferase superfamily. ATCase family. In terms of assembly, heterododecamer (2C3:3R2) of six catalytic PyrB chains organized as two trimers (C3), and six regulatory PyrI chains organized as three dimers (R2).

The catalysed reaction is carbamoyl phosphate + L-aspartate = N-carbamoyl-L-aspartate + phosphate + H(+). Its pathway is pyrimidine metabolism; UMP biosynthesis via de novo pathway; (S)-dihydroorotate from bicarbonate: step 2/3. Functionally, catalyzes the condensation of carbamoyl phosphate and aspartate to form carbamoyl aspartate and inorganic phosphate, the committed step in the de novo pyrimidine nucleotide biosynthesis pathway. The chain is Aspartate carbamoyltransferase catalytic subunit from Clostridium perfringens (strain ATCC 13124 / DSM 756 / JCM 1290 / NCIMB 6125 / NCTC 8237 / Type A).